The following is a 114-amino-acid chain: Ribonuclease P protein component (114 aa).

The protein belongs to the RnpA family. As to quaternary structure, consists of a catalytic RNA component (M1 or rnpB) and a protein subunit.

It carries out the reaction Endonucleolytic cleavage of RNA, removing 5'-extranucleotides from tRNA precursor.. RNaseP catalyzes the removal of the 5'-leader sequence from pre-tRNA to produce the mature 5'-terminus. It can also cleave other RNA substrates such as 4.5S RNA. The protein component plays an auxiliary but essential role in vivo by binding to the 5'-leader sequence and broadening the substrate specificity of the ribozyme. This is Ribonuclease P protein component from Lactiplantibacillus plantarum (strain ATCC BAA-793 / NCIMB 8826 / WCFS1) (Lactobacillus plantarum).